The primary structure comprises 183 residues: Glutathione-regulated potassium-efflux system ancillary protein KefG (183 aa).

It belongs to the NAD(P)H dehydrogenase (quinone) family. KefG subfamily. Interacts with KefB.

It is found in the cell inner membrane. The enzyme catalyses a quinone + NADH + H(+) = a quinol + NAD(+). It carries out the reaction a quinone + NADPH + H(+) = a quinol + NADP(+). Functionally, regulatory subunit of a potassium efflux system that confers protection against electrophiles. Required for full activity of KefB. The sequence is that of Glutathione-regulated potassium-efflux system ancillary protein KefG from Salmonella paratyphi C (strain RKS4594).